Here is a 179-residue protein sequence, read N- to C-terminus: Large ribosomal subunit protein uL6 (179 aa).

Belongs to the universal ribosomal protein uL6 family. Part of the 50S ribosomal subunit.

In terms of biological role, this protein binds to the 23S rRNA, and is important in its secondary structure. It is located near the subunit interface in the base of the L7/L12 stalk, and near the tRNA binding site of the peptidyltransferase center. The polypeptide is Large ribosomal subunit protein uL6 (Rhodococcus erythropolis (strain PR4 / NBRC 100887)).